Reading from the N-terminus, the 340-residue chain is Histidinol-phosphate aminotransferase (340 aa).

N6-(pyridoxal phosphate)lysine is present on Lys-204.

The protein belongs to the class-II pyridoxal-phosphate-dependent aminotransferase family. Histidinol-phosphate aminotransferase subfamily. The cofactor is pyridoxal 5'-phosphate.

The catalysed reaction is L-histidinol phosphate + 2-oxoglutarate = 3-(imidazol-4-yl)-2-oxopropyl phosphate + L-glutamate. It participates in amino-acid biosynthesis; L-histidine biosynthesis; L-histidine from 5-phospho-alpha-D-ribose 1-diphosphate: step 7/9. This chain is Histidinol-phosphate aminotransferase, found in Thermococcus gammatolerans (strain DSM 15229 / JCM 11827 / EJ3).